We begin with the raw amino-acid sequence, 102 residues long: Trans-acting regulatory protein HvrA (102 aa).

A DNA-binding region spans residues 80-85 (RGRKPK).

The protein belongs to the histone-like protein H-NS family. In terms of assembly, homodimer that oligomerizes on DNA into higher-order complexes that form bridges between disparate regions of DNA compacting it.

It is found in the cytoplasm. The protein localises to the nucleoid. Functionally, a dim-light trans-acting activator of Puf and Puh expression, that has no effect on the expression of the Puc operon. Responsible for regulating light-harvesting-I and reaction center structural gene expression differentially from that of light-harvesting-II expression in response to alterations in light. Proper light regulation of light-harvesting and reaction center polypeptide synthesis is an important physiological trait that enables cells to adapt to ever-changing environmental conditions of light intensity. In Rhodobacter capsulatus (Rhodopseudomonas capsulata), this protein is Trans-acting regulatory protein HvrA (hvrA).